A 1088-amino-acid polypeptide reads, in one-letter code: V-type proton ATPase catalytic subunit A (1088 aa).

ATP is bound at residue glycine 257 to threonine 264. Residues leucine 485 to isoleucine 662 form the DOD-type homing endonuclease domain.

The protein belongs to the ATPase alpha/beta chains family. As to quaternary structure, V-ATPase is a heteromultimeric enzyme composed of a peripheral catalytic V1 complex (components A to H) attached to an integral membrane V0 proton pore complex (components: a, c, c', c'', d, e, f and VOA1). In terms of processing, this protein undergoes a protein self splicing that involves a post-translational excision of the VDE intervening region (intein) followed by peptide ligation.

Its subcellular location is the vacuole membrane. The enzyme catalyses ATP + H2O + 4 H(+)(in) = ADP + phosphate + 5 H(+)(out). Functionally, catalytic subunit of the V1 complex of vacuolar(H+)-ATPase (V-ATPase), a multisubunit enzyme composed of a peripheral complex (V1) that hydrolyzes ATP and a membrane integral complex (V0) that translocates protons. V-ATPase is responsible for acidifying and maintaining the pH of intracellular compartments. VDE is an endonuclease that can cleave at a site present in a VMA1 allele that lacks the derived endonuclease segment of the open reading frame; cleavage at this site only occurs during meiosis and initiates 'homing', a genetic event that converts a VMA1 allele lacking VDE into one that contains it. The polypeptide is V-type proton ATPase catalytic subunit A (VMA1) (Candida tropicalis (Yeast)).